We begin with the raw amino-acid sequence, 62 residues long: Photosystem II reaction center protein Z (62 aa).

Helical transmembrane passes span 8–28 and 41–61; these read ALAALVFFSFVMVIGVPFAYA and WVGSGIWTILVIVVAVLNFFV.

This sequence belongs to the PsbZ family. PSII is composed of 1 copy each of membrane proteins PsbA, PsbB, PsbC, PsbD, PsbE, PsbF, PsbH, PsbI, PsbJ, PsbK, PsbL, PsbM, PsbT, PsbX, PsbY, PsbZ, Psb30/Ycf12, peripheral proteins PsbO, CyanoQ (PsbQ), PsbU, PsbV and a large number of cofactors. It forms dimeric complexes.

The protein resides in the cellular thylakoid membrane. In terms of biological role, may control the interaction of photosystem II (PSII) cores with the light-harvesting antenna, regulates electron flow through the 2 photosystem reaction centers. PSII is a light-driven water plastoquinone oxidoreductase, using light energy to abstract electrons from H(2)O, generating a proton gradient subsequently used for ATP formation. The chain is Photosystem II reaction center protein Z from Gloeothece citriformis (strain PCC 7424) (Cyanothece sp. (strain PCC 7424)).